Reading from the N-terminus, the 342-residue chain is MAPSFEEPTVALGAASKAAPKLVAPEPEHCPGPESEQAGKGDACAGCPNQSICASAPKGPDPDIPIITARLSSIRHKILVLSGKGGVGKSTFTSLLANAFASNPDSTVGVMDTDICGPSIPKMMDVETETIHVSNAGWNPVWVSDNLAVMSVQFMLPNRDDAVIWRGPKKNGLIKQFLKDVEWGELDYLIVDTPPGTSDEHLSVNSFLKESGVDGAVLVTTPQEVSLLDVRKEIDFCRKAGIRILGLVENMSGFVCPKCTHESQIFKPTTGGGGRLAADMGIPFLGSVPLDPRVGMACDYGENFMDRYPESPASMALRKVVRTISRQVGEDPDEVLPETDAV.

Residues 16-42 (SKAAPKLVAPEPEHCPGPESEQAGKGD) are disordered. Residues Cys-30, Cys-44, Cys-47, and Cys-53 each contribute to the [4Fe-4S] cluster site. Position 83–90 (83–90 (GKGGVGKS)) interacts with ATP. 2 residues coordinate [4Fe-4S] cluster: Cys-256 and Cys-259.

Belongs to the Mrp/NBP35 ATP-binding proteins family. NUBP1/NBP35 subfamily. Heterotetramer of 2 NBP35 and 2 CFD1 chains. [4Fe-4S] cluster serves as cofactor.

Its subcellular location is the cytoplasm. Its function is as follows. Component of the cytosolic iron-sulfur (Fe/S) protein assembly (CIA) machinery. Required for maturation of extramitochondrial Fe-S proteins. The NBP35-CFD1 heterotetramer forms a Fe-S scaffold complex, mediating the de novo assembly of an Fe-S cluster and its transfer to target apoproteins. In Coccidioides immitis (strain RS) (Valley fever fungus), this protein is Cytosolic Fe-S cluster assembly factor NBP35.